The chain runs to 211 residues: Large ribosomal subunit protein uL4 (211 aa).

A disordered region spans residues 63–94; that stretch reads RFGRQKGGGTARHGARSAPQFVGGGKAHGPRV.

Belongs to the universal ribosomal protein uL4 family. Part of the 50S ribosomal subunit.

In terms of biological role, one of the primary rRNA binding proteins, this protein initially binds near the 5'-end of the 23S rRNA. It is important during the early stages of 50S assembly. It makes multiple contacts with different domains of the 23S rRNA in the assembled 50S subunit and ribosome. Its function is as follows. Forms part of the polypeptide exit tunnel. The polypeptide is Large ribosomal subunit protein uL4 (Maricaulis maris (strain MCS10) (Caulobacter maris)).